The sequence spans 394 residues: Elongation factor Tu (394 aa).

A tr-type G domain is found at 10–204 (KEHANIGTIG…AVDDYIPTPE (195 aa)). Residues 19-26 (GHVDHGKT) are G1. 19–26 (GHVDHGKT) provides a ligand contact to GTP. Mg(2+) is bound at residue T26. Residues 60-64 (GITIN) are G2. Positions 81–84 (DCPG) are G3. GTP contacts are provided by residues 81-85 (DCPGH) and 136-139 (NKVD). Positions 136–139 (NKVD) are G4. The G5 stretch occupies residues 174–176 (SAL).

This sequence belongs to the TRAFAC class translation factor GTPase superfamily. Classic translation factor GTPase family. EF-Tu/EF-1A subfamily. In terms of assembly, monomer.

The protein localises to the cytoplasm. It carries out the reaction GTP + H2O = GDP + phosphate + H(+). Its function is as follows. GTP hydrolase that promotes the GTP-dependent binding of aminoacyl-tRNA to the A-site of ribosomes during protein biosynthesis. The protein is Elongation factor Tu of Staphylococcus epidermidis (strain ATCC 35984 / DSM 28319 / BCRC 17069 / CCUG 31568 / BM 3577 / RP62A).